We begin with the raw amino-acid sequence, 351 residues long: Adenine deaminase (351 aa).

Histidine 19, histidine 21, and histidine 208 together coordinate Zn(2+). Glutamate 211 serves as the catalytic Proton donor. Aspartate 288 lines the Zn(2+) pocket. Residue aspartate 289 coordinates substrate.

Belongs to the metallo-dependent hydrolases superfamily. Adenosine and AMP deaminases family. Adenine deaminase type 2 subfamily. Zn(2+) serves as cofactor.

The protein localises to the cytoplasm. It is found in the nucleus. It carries out the reaction adenine + H2O + H(+) = hypoxanthine + NH4(+). Its function is as follows. Catalyzes the hydrolytic deamination of adenine to hypoxanthine. Plays an important role in the purine salvage pathway and in nitrogen catabolism. The protein is Adenine deaminase (aah1) of Aspergillus oryzae (strain ATCC 42149 / RIB 40) (Yellow koji mold).